Consider the following 117-residue polypeptide: MNNIIKMLNEEQMKTDVPQFGAGDTVVVKVRVVEGGKERLQAFEGIVIAKRNRGVHSAFTVRKISNGEGVERAFQTHSPIISSIEVKRRGRVRRAKLYYLRERSGKSARIREKLATK.

Belongs to the bacterial ribosomal protein bL19 family.

Its function is as follows. This protein is located at the 30S-50S ribosomal subunit interface and may play a role in the structure and function of the aminoacyl-tRNA binding site. This chain is Large ribosomal subunit protein bL19, found in Shewanella pealeana (strain ATCC 700345 / ANG-SQ1).